The chain runs to 173 residues: Shikimate kinase 2 (173 aa).

12 to 17 (GCGKTT) provides a ligand contact to ATP. 2 residues coordinate Mg(2+): threonine 16 and aspartate 32. 3 residues coordinate substrate: aspartate 34, arginine 58, and glycine 79. An LID domain region spans residues 112-126 (EENPQDNQRPTLTGR). An ATP-binding site is contributed by arginine 120. Arginine 139 serves as a coordination point for substrate. ATP is bound at residue glutamine 155.

Belongs to the shikimate kinase family. AroL subfamily. As to quaternary structure, monomer. The cofactor is Mg(2+).

The protein localises to the cytoplasm. It catalyses the reaction shikimate + ATP = 3-phosphoshikimate + ADP + H(+). It functions in the pathway metabolic intermediate biosynthesis; chorismate biosynthesis; chorismate from D-erythrose 4-phosphate and phosphoenolpyruvate: step 5/7. In terms of biological role, catalyzes the specific phosphorylation of the 3-hydroxyl group of shikimic acid using ATP as a cosubstrate. This chain is Shikimate kinase 2, found in Pectobacterium carotovorum subsp. carotovorum (strain PC1).